We begin with the raw amino-acid sequence, 454 residues long: Bifunctional protein GlmU (454 aa).

The segment at 1 to 226 (MALNVVILAA…AIEVEGANNR (226 aa)) is pyrophosphorylase. Residues 8–11 (LAAG), K22, Q73, 78–79 (GT), 100–102 (YGD), G137, E151, N166, and N224 contribute to the UDP-N-acetyl-alpha-D-glucosamine site. D102 provides a ligand contact to Mg(2+). Position 224 (N224) interacts with Mg(2+). A linker region spans residues 227–247 (VQLAQLERAYQAREAEKLMIA). The segment at 248–454 (GANLRDPSRI…GWQRPVKIKK (207 aa)) is N-acetyltransferase. Residues R330 and K348 each contribute to the UDP-N-acetyl-alpha-D-glucosamine site. The active-site Proton acceptor is H360. UDP-N-acetyl-alpha-D-glucosamine-binding residues include Y363 and N374. Acetyl-CoA is bound by residues A377, 383 to 384 (NY), S402, A420, and R437.

This sequence in the N-terminal section; belongs to the N-acetylglucosamine-1-phosphate uridyltransferase family. In the C-terminal section; belongs to the transferase hexapeptide repeat family. As to quaternary structure, homotrimer. Mg(2+) is required as a cofactor.

Its subcellular location is the cytoplasm. The enzyme catalyses alpha-D-glucosamine 1-phosphate + acetyl-CoA = N-acetyl-alpha-D-glucosamine 1-phosphate + CoA + H(+). The catalysed reaction is N-acetyl-alpha-D-glucosamine 1-phosphate + UTP + H(+) = UDP-N-acetyl-alpha-D-glucosamine + diphosphate. The protein operates within nucleotide-sugar biosynthesis; UDP-N-acetyl-alpha-D-glucosamine biosynthesis; N-acetyl-alpha-D-glucosamine 1-phosphate from alpha-D-glucosamine 6-phosphate (route II): step 2/2. Its pathway is nucleotide-sugar biosynthesis; UDP-N-acetyl-alpha-D-glucosamine biosynthesis; UDP-N-acetyl-alpha-D-glucosamine from N-acetyl-alpha-D-glucosamine 1-phosphate: step 1/1. It functions in the pathway bacterial outer membrane biogenesis; LPS lipid A biosynthesis. In terms of biological role, catalyzes the last two sequential reactions in the de novo biosynthetic pathway for UDP-N-acetylglucosamine (UDP-GlcNAc). The C-terminal domain catalyzes the transfer of acetyl group from acetyl coenzyme A to glucosamine-1-phosphate (GlcN-1-P) to produce N-acetylglucosamine-1-phosphate (GlcNAc-1-P), which is converted into UDP-GlcNAc by the transfer of uridine 5-monophosphate (from uridine 5-triphosphate), a reaction catalyzed by the N-terminal domain. This chain is Bifunctional protein GlmU, found in Shewanella sp. (strain MR-4).